Reading from the N-terminus, the 336-residue chain is PTS system glucitol/sorbitol-specific EIIB component (336 aa).

The PTS EIIB type-5 domain occupies 3-195; sequence KYNAIKIVKG…AVQSMITTIL (193 aa). The Phosphocysteine intermediate; for EIIB activity role is filled by cysteine 75. Cysteine 75 carries the phosphocysteine; by EIIA modification. The next 5 membrane-spanning stretches (helical) occupy residues 194–214, 228–248, 250–270, 278–298, and 312–332; these read ILPF…SGFG, GIGL…ALLG, GAVI…KGTI, ALFA…LGLA, and VLYS…VASI.

It is found in the cell membrane. It catalyses the reaction D-sorbitol(out) + N(pros)-phospho-L-histidyl-[protein] = D-sorbitol 6-phosphate(in) + L-histidyl-[protein]. In terms of biological role, the phosphoenolpyruvate-dependent sugar phosphotransferase system (sugar PTS), a major carbohydrate active transport system, catalyzes the phosphorylation of incoming sugar substrates concomitantly with their translocation across the cell membrane. The enzyme II complex composed of SrlA, SrlB and SrlE is involved in glucitol/sorbitol transport. The protein is PTS system glucitol/sorbitol-specific EIIB component (srlE) of Clostridium beijerinckii (strain ATCC 51743 / NCIMB 8052) (Clostridium acetobutylicum).